A 556-amino-acid chain; its full sequence is Potassium-transporting ATPase potassium-binding subunit (556 aa).

10 consecutive transmembrane segments (helical) span residues 5–25 (LAGI…HVPL), 65–85 (SVLA…LVQG), 133–153 (GLAV…IALV), 176–196 (IRIL…GGAI), 249–269 (PTTW…FSLP), 283–303 (YAIV…TLFF), 377–397 (AGLY…GLMV), 415–435 (LAAT…AVAM), 483–503 (ALGL…LALA), and 526–546 (FVGM…LPML).

This sequence belongs to the KdpA family. In terms of assembly, the system is composed of three essential subunits: KdpA, KdpB and KdpC.

It is found in the cell membrane. Part of the high-affinity ATP-driven potassium transport (or Kdp) system, which catalyzes the hydrolysis of ATP coupled with the electrogenic transport of potassium into the cytoplasm. This subunit binds the extracellular potassium ions and delivers the ions to the membrane domain of KdpB through an intramembrane tunnel. The chain is Potassium-transporting ATPase potassium-binding subunit from Mycolicibacterium vanbaalenii (strain DSM 7251 / JCM 13017 / BCRC 16820 / KCTC 9966 / NRRL B-24157 / PYR-1) (Mycobacterium vanbaalenii).